The following is a 399-amino-acid chain: RNA polymerase sigma factor SigA1 (399 aa).

Positions 1–73 (MTQLISIDKE…DEDSVGEDED (73 aa)) are disordered. A compositionally biased stretch (acidic residues) spans 60–73 (DAIDDEDSVGEDED). A sigma-70 factor domain-2 region spans residues 167-237 (MVQSNLRLVV…TRAIADQSRT (71 aa)). The Interaction with polymerase core subunit RpoC signature appears at 191–194 (DLIQ). The interval 246–321 (ETISRIKKTT…EADGETPEDE (76 aa)) is sigma-70 factor domain-3. The tract at residues 334–387 (VLSTLSPRERDVLRLRYGLDDGRMKTLEEIGQLFNVTRERIRQIEAKALRKLRH) is sigma-70 factor domain-4. The segment at residues 360–379 (LEEIGQLFNVTRERIRQIEA) is a DNA-binding region (H-T-H motif).

It belongs to the sigma-70 factor family. RpoD/SigA subfamily. In terms of assembly, interacts transiently with the RNA polymerase catalytic core.

The protein localises to the cytoplasm. Sigma factors are initiation factors that promote the attachment of RNA polymerase to specific initiation sites and are then released. This sigma factor is the primary sigma factor during exponential growth. The chain is RNA polymerase sigma factor SigA1 from Synechococcus elongatus (strain ATCC 33912 / PCC 7942 / FACHB-805) (Anacystis nidulans R2).